The chain runs to 949 residues: MASNHPAFSFHQKQVLRQELTQIQSSLNGGGGHGGKGAPGPGGALPTCPACHKITPRTEAPVSSVSNSLENALHTSAHSTEESLPKRPLGKHSKVSVEKIDLKGLSHTKNDRNVECSFEVLWSDSSITSVTKSSSEVTEFISKLCQLYPEENLEKLIPCLAGPDAFYVERNHVDLDSGLRYLASLPSHVLKNDHVRRFLSTSSPPQQLQSPSPGNPSLSKVGTVMGVSGRPVCGVAGIPSSQSGAQHHGQHPAGSAAPLPHCSHAGSAGSALAYRTQMDTSPAILMPSSLQTPQTQEQNGILDWLRKLRLHKYYPVFKQLSMEKFLSLTEEDLNKFESLTMGAKKKLKTQLELEKEKSERRCLNPSAPPLVTSSGVARVPPTSHVGPVQSGRGSHAAELRVEVEQPHHQLPREGSSSEYSSSSSSPMGVQAREESSDSAEENDRRVEIHLESSDKEKPVMLLNHFTSSSARPTAQVLPVQNEASSNPSGHHPLPPQMLSAASHITPIRMLNSVHKPERGSADMKLLSSSVHSLLSLEERNKGSGPRSSMKVDKSFGSAMMDVLPASAPHQPVQVLSGLSESSSMSPTVSFGPRTKVVHASTLDRVLKTAQQPALVVETSTAATGTPSTVLHAARPPIKLLLSSSVPADSAISGQTSCPNNVQISVPPAIINPRTALYTANTKVAFSAMSSMPVGPLQGGFCANSNTASPSSHPSTSFANMATLPSCPAPSSSPALSSVPESSFYSSSGGGGSTGNIPASNPNHHHHHHHQQPPAPPQPAPPPPGCIVCTSCGCSGSCGSSGLTVSYANYFQHPFSGPSVFTFPFLPFSPMCSSGYVSAQQYGGGSTFPVVHAPYSSSGTPDPVLSGQSTFAVPPMQNFMAGTAGVYQTQGLVGSSNGSSHKKSGNLSCYNCGATGHRAQDCKQPSMDFNRPGTFRLKYAPPAESLDSTD.

Disordered stretches follow at residues 25 to 44, 59 to 92, 200 to 221, 236 to 262, 355 to 457, and 739 to 779; these read SSLN…PGGA, EAPV…LGKH, STSS…LSKV, AGIP…LPHC, KEKS…DKEK, and PESS…PQPA. The segment covering 28–43 has biased composition (gly residues); sequence NGGGGHGGKGAPGPGG. Over residues 61-78 the composition is skewed to polar residues; it reads PVSSVSNSLENALHTSAH. Low complexity predominate over residues 200 to 219; the sequence is STSSPPQQLQSPSPGNPSLS. Residues 395–411 show a composition bias toward basic and acidic residues; that stretch reads HAAELRVEVEQPHHQLP. A compositionally biased stretch (low complexity) spans 416–425; the sequence is SSEYSSSSSS. A compositionally biased stretch (basic and acidic residues) spans 431–457; the sequence is AREESSDSAEENDRRVEIHLESSDKEK. Residues 906 to 923 form a CCHC-type zinc finger; sequence LSCYNCGATGHRAQDCKQ.

This chain is Zinc finger CCHC domain-containing protein 14 (ZCCHC14), found in Homo sapiens (Human).